We begin with the raw amino-acid sequence, 322 residues long: tRNA-dihydrouridine synthase B (322 aa).

FMN is bound by residues 16 to 18 (PMA) and Gln-70. Cys-100 serves as the catalytic Proton donor. FMN-binding positions include Lys-139, 200–202 (NGD), and 224–225 (GR).

It belongs to the Dus family. DusB subfamily. The cofactor is FMN.

It carries out the reaction a 5,6-dihydrouridine in tRNA + NAD(+) = a uridine in tRNA + NADH + H(+). The enzyme catalyses a 5,6-dihydrouridine in tRNA + NADP(+) = a uridine in tRNA + NADPH + H(+). In terms of biological role, catalyzes the synthesis of 5,6-dihydrouridine (D), a modified base found in the D-loop of most tRNAs, via the reduction of the C5-C6 double bond in target uridines. The protein is tRNA-dihydrouridine synthase B of Vibrio cholerae serotype O1 (strain ATCC 39315 / El Tor Inaba N16961).